Consider the following 587-residue polypeptide: MLCLSLNSSSTSPPKSPLHHSFSRRSMRSWVCSPRVQRKKLGFWSSPKAVLSAVSGAGSEAGKVEEAEEYDAIVIGSGIGGLVAATQLAVKGARVLVLEKYVIPGGSSGFFQRDGFTFDVGSSVMFGFSDKGNLNLITQALEAVDCKLRTIPDPTTVHFHLPDNLSIRVHREYDMFISELVNYFPHEKEGIRRFYNECWKIFNSLNSLELKSLEEPMYLFGQFFRKPVECLTLAYYLPQNAGDIARKFIKDPQLLSFIDAECFIVSTVKALHTPMINASMVLCDRHFGGINYPVGGVGGIAKALANGLVNKGSKLLYKANVTKILLKDGKAVGVKLSNGREFFAKTVISNATRWDTFGKLLKVEDIPQEEKNFKKIYLKAPSFLSIHMGVKAFVLPPDTDCHHFILEDNWGRLELPYGSIFLSIPTVLDPSLAPEGHHIFHIFTTSSIENWEGLSHKEYEEKKELVADEIITRLEKKLFPGLKDSVVLKEVGTPKTHRRFLARDSGTYGPMPRKVPKGLLGMPFNTTAINGLYCVGDSCFPGQGVIAVAFSGVMCAHRVAADLGIEKKAPVLDAALLRLLGWLRTVA.

The span at 1–13 shows a compositional bias: low complexity; it reads MLCLSLNSSSTSP. The disordered stretch occupies residues 1–21; that stretch reads MLCLSLNSSSTSPPKSPLHHS. Residues 1–50 constitute a chloroplast transit peptide; sequence MLCLSLNSSSTSPPKSPLHHSFSRRSMRSWVCSPRVQRKKLGFWSSPKAV.

The protein belongs to the carotenoid/retinoid oxidoreductase family. CrtISO subfamily. The cofactor is NAD(+). Requires NADP(+) as cofactor. FAD is required as a cofactor. Up-regulated in the flower buds and flower lip tissue, while it is weakly expressed in leaves.

The protein resides in the plastid. Its subcellular location is the chloroplast membrane. It carries out the reaction 7,7',9,9'-tetra-cis-lycopene = all-trans-lycopene. It functions in the pathway carotenoid biosynthesis; lycopene biosynthesis. In terms of biological role, carotene cis-trans-isomerase that converts 7,9,9'-tri-cis-neurosporene to 9'-cis-neurosporene and 7,9,9',7'-tetra-cis-lycopene (also known as prolycopene) into all-trans-lycopene. Isomerization requires redox-active components, suggesting that isomerization is achieved by a reversible redox reaction acting at specific double bonds. Isomerizes adjacent cis-double bonds at C7 and C9 pairwise into the trans-configuration, but is incapable of isomerizing single cis-double bonds at C9 and C9'. In Oncidium hybrid cultivar (Orchid), this protein is Prolycopene isomerase 1, chloroplastic (CRTISO1).